The primary structure comprises 765 residues: 5-methyltetrahydropteroyltriglutamate--homocysteine methyltransferase (765 aa).

5-methyltetrahydropteroyltri-L-glutamate is bound by residues 16-19 (RELK) and K121. Residues 441–443 (IGS) and E494 each bind L-homocysteine. Residues 441–443 (IGS) and E494 each bind L-methionine. 5-methyltetrahydropteroyltri-L-glutamate is bound by residues 525–526 (RC) and W571. D609 lines the L-homocysteine pocket. Residue D609 coordinates L-methionine. A 5-methyltetrahydropteroyltri-L-glutamate-binding site is contributed by E615. 3 residues coordinate Zn(2+): H651, C653, and E675. H704 serves as the catalytic Proton donor. C736 provides a ligand contact to Zn(2+).

This sequence belongs to the vitamin-B12 independent methionine synthase family. The cofactor is Zn(2+).

The catalysed reaction is 5-methyltetrahydropteroyltri-L-glutamate + L-homocysteine = tetrahydropteroyltri-L-glutamate + L-methionine. The protein operates within amino-acid biosynthesis; L-methionine biosynthesis via de novo pathway; L-methionine from L-homocysteine (MetE route): step 1/1. Functionally, catalyzes the transfer of a methyl group from 5-methyltetrahydrofolate to homocysteine resulting in methionine formation. The protein is 5-methyltetrahydropteroyltriglutamate--homocysteine methyltransferase of Saccharophagus degradans (strain 2-40 / ATCC 43961 / DSM 17024).